The chain runs to 244 residues: Cell division protein ZipA (244 aa).

Residues 1–4 lie on the Periplasmic side of the membrane; that stretch reads MSDM. A helical membrane pass occupies residues 5-25; that stretch reads AMIRIGILIAGLLLVAAIFLF. The Cytoplasmic portion of the chain corresponds to 26–244; sequence GRPKKSPQGR…APPLTKSPRW (219 aa). Positions 30-91 are disordered; sequence KSPQGRRVDK…GAGGNDVGKR (62 aa). Positions 35 to 50 are enriched in basic and acidic residues; it reads RRVDKDDTQPRERREP.

Belongs to the ZipA family. In terms of assembly, interacts with FtsZ via their C-terminal domains.

Its subcellular location is the cell inner membrane. Essential cell division protein that stabilizes the FtsZ protofilaments by cross-linking them and that serves as a cytoplasmic membrane anchor for the Z ring. Also required for the recruitment to the septal ring of downstream cell division proteins. This Xanthomonas campestris pv. campestris (strain ATCC 33913 / DSM 3586 / NCPPB 528 / LMG 568 / P 25) protein is Cell division protein ZipA.